A 1378-amino-acid polypeptide reads, in one-letter code: Tonsoku-like protein (1378 aa).

8 TPR repeats span residues 27-60, 67-100, 107-147, 162-195, 202-235, 242-275, 311-344, and 352-385; these read AALC…RERA, AVAH…AHSL, QRAW…VDEE, TRLY…AEQN, FRAR…AHTM, SECC…GSQK, MVIC…AELL, and AIIH…RSGN. Residues 475–524 form a disordered region; the sequence is AATAESEALEAGEVELSEGEDDTDGLTPQLEEDEELQGHLGRRKGSKWNR. Positions 481 to 509 are enriched in acidic residues; that stretch reads EALEAGEVELSEGEDDTDGLTPQLEEDEE. The segment covering 514-523 has biased composition (basic residues); sequence LGRRKGSKWN. ANK repeat units follow at residues 528–557, 561–590, and 597–626; these read MGET…PLNP, CGWT…AVDD, and EGIT…SVTL. The disordered stretch occupies residues 667–789; it reads AASGQDPHSS…REAATASTSR (123 aa). The segment covering 672-684 has biased composition (polar residues); it reads DPHSSQAFHTPSS. Residues 691 to 702 show a composition bias toward pro residues; it reads TSPPLSPCPEPP. The residue at position 719 (Ser719) is a Phosphoserine. 2 stretches are compositionally biased toward low complexity: residues 736–753 and 777–789; these read GPAS…AGPA and ASNR…STSR. Arg797 bears the Omega-N-methylarginine mark. Positions 842–933 are disordered; that stretch reads LTRSRRPRPR…PLGPAPPPPI (92 aa). 2 stretches are compositionally biased toward polar residues: residues 883–899 and 907–918; these read CMQS…SSLA and STPRVSEPSGDS. 7 LRR repeats span residues 1069-1093, 1097-1122, 1128-1151, 1188-1212, 1247-1270, 1275-1300, and 1331-1354; these read HTAL…LVAA, MPSL…AMGL, LQSL…SLAS, AEHL…TLQS, GCAL…DLCR, CPSL…LLST, and AAQL…ALRQ.

This sequence belongs to the Tonsoku family. In terms of assembly, component of the MMS22L-TONSL complex, a complex at least composed of MMS22L and TONSL/NFKBIL2. Interacts with the MCM complex, the FACT complex and the RPA complex. Interacts with MCM5; the interaction is direct. Binds histones, with a strong preference for histone H3.1 (histones H3.1 and H3-4/H3.1t). Interacts (via ANK repeats) with histone H4; specifically binds histone H4 lacking methylation at 'Lys-20' (H4K20me0). May interact with DNAJC9; the interaction seems to be histone-dependent. In terms of tissue distribution, expressed in heart, skeletal muscle and tracheal epithelial cells.

The protein resides in the nucleus. It is found in the chromosome. Its subcellular location is the cytoplasm. Functionally, component of the MMS22L-TONSL complex, a complex that promotes homologous recombination-mediated repair of double-strand breaks (DSBs) at stalled or collapsed replication forks. The MMS22L-TONSL complex is required to maintain genome integrity during DNA replication. It mediates the assembly of RAD51 filaments on single-stranded DNA (ssDNA): the MMS22L-TONSL complex is recruited to DSBs following histone replacement by histone chaperones and eviction of the replication protein A complex (RPA/RP-A) from DSBs. Following recruitment to DSBs, the TONSL-MMS22L complex promotes recruitment of RAD51 filaments and subsequent homologous recombination. Within the complex, TONSL acts as a histone reader, which recognizes and binds newly synthesized histones following their replacement by histone chaperones. Specifically binds histone H4 lacking methylation at 'Lys-20' (H4K20me0) and histone H3.1. This chain is Tonsoku-like protein, found in Homo sapiens (Human).